The sequence spans 156 residues: uncharacterized protein (156 aa).

One can recognise an N-acetyltransferase domain in the interval 1–145 (MIIRKFSSKD…DAILMIKKKP (145 aa)).

It belongs to the acetyltransferase family.

Its subcellular location is the cytoplasm. This is an uncharacterized protein from Methanocaldococcus jannaschii (strain ATCC 43067 / DSM 2661 / JAL-1 / JCM 10045 / NBRC 100440) (Methanococcus jannaschii).